The primary structure comprises 585 residues: Proline--tRNA ligase (585 aa).

This sequence belongs to the class-II aminoacyl-tRNA synthetase family. ProS type 1 subfamily. In terms of assembly, homodimer.

The protein localises to the cytoplasm. The catalysed reaction is tRNA(Pro) + L-proline + ATP = L-prolyl-tRNA(Pro) + AMP + diphosphate. Catalyzes the attachment of proline to tRNA(Pro) in a two-step reaction: proline is first activated by ATP to form Pro-AMP and then transferred to the acceptor end of tRNA(Pro). As ProRS can inadvertently accommodate and process non-cognate amino acids such as alanine and cysteine, to avoid such errors it has two additional distinct editing activities against alanine. One activity is designated as 'pretransfer' editing and involves the tRNA(Pro)-independent hydrolysis of activated Ala-AMP. The other activity is designated 'posttransfer' editing and involves deacylation of mischarged Ala-tRNA(Pro). The misacylated Cys-tRNA(Pro) is not edited by ProRS. In Acidobacterium capsulatum (strain ATCC 51196 / DSM 11244 / BCRC 80197 / JCM 7670 / NBRC 15755 / NCIMB 13165 / 161), this protein is Proline--tRNA ligase.